The following is a 94-amino-acid chain: Co-chaperonin GroES (94 aa).

This sequence belongs to the GroES chaperonin family. As to quaternary structure, heptamer of 7 subunits arranged in a ring. Interacts with the chaperonin GroEL.

It is found in the cytoplasm. Together with the chaperonin GroEL, plays an essential role in assisting protein folding. The GroEL-GroES system forms a nano-cage that allows encapsulation of the non-native substrate proteins and provides a physical environment optimized to promote and accelerate protein folding. GroES binds to the apical surface of the GroEL ring, thereby capping the opening of the GroEL channel. In Clostridioides difficile (strain 630) (Peptoclostridium difficile), this protein is Co-chaperonin GroES.